The chain runs to 89 residues: Small ribosomal subunit protein bS20 (89 aa).

Belongs to the bacterial ribosomal protein bS20 family.

Functionally, binds directly to 16S ribosomal RNA. The sequence is that of Small ribosomal subunit protein bS20 from Syntrophus aciditrophicus (strain SB).